A 320-amino-acid polypeptide reads, in one-letter code: NAC domain-containing protein 18 (320 aa).

The tract at residues 1–22 (MESTDSSGGPPPPQPNLPPGFR) is disordered. The span at 9–18 (GPPPPQPNLP) shows a compositional bias: pro residues. In terms of domain architecture, NAC spans 17 to 177 (LPPGFRFHPT…DWVLCRIYKK (161 aa)). A DNA-binding region spans residues 118–183 (VGVKKALVFY…IYKKNNSTAS (66 aa)).

Restricted primarily to the region of the embryo including the SAM. Expressed in the outer integument, but seems not expressed in the embryo at the torpedo stage.

It localises to the nucleus. Its function is as follows. May encode a transcription factor involved in the elaboration of shoot apical meristems (SAM). Together with NAC056/NARS1, regulates embryogenesis by regulating the development and degeneration of ovule integuments, a process required for intertissue communication between the embryo and the maternal integument. This Arabidopsis thaliana (Mouse-ear cress) protein is NAC domain-containing protein 18 (NAC018).